A 169-amino-acid polypeptide reads, in one-letter code: MPLLDSFTVDHTRMNAPAVRVAKHMSTPKGDAITVFDLRFCAPNKDILSERGIHTLEHLFAGFMRDHLNGSDVEIIDISPMGCRTGFYMSLIGEPSERQVADAWLASMEDVLKVVEQSEIPELNEYQCGTYQMHSLEQAQDIARNIIAAGVSVNRNDDLKLSDEILGQL.

Fe cation-binding residues include histidine 54, histidine 58, and cysteine 128.

Belongs to the LuxS family. As to quaternary structure, homodimer. Fe cation is required as a cofactor.

It catalyses the reaction S-(5-deoxy-D-ribos-5-yl)-L-homocysteine = (S)-4,5-dihydroxypentane-2,3-dione + L-homocysteine. In terms of biological role, involved in the synthesis of autoinducer 2 (AI-2) which is secreted by bacteria and is used to communicate both the cell density and the metabolic potential of the environment. The regulation of gene expression in response to changes in cell density is called quorum sensing. Catalyzes the transformation of S-ribosylhomocysteine (RHC) to homocysteine (HC) and 4,5-dihydroxy-2,3-pentadione (DPD). The sequence is that of S-ribosylhomocysteine lyase from Shewanella sp. (strain MR-7).